The sequence spans 503 residues: Pre-glycoprotein polyprotein GP complex (503 aa).

G2 is lipidated: N-myristoyl glycine; by host. Over G2–E17 the chain is Extracellular. A helical membrane pass occupies residues V18–K33. Over G34 to D58 the chain is Cytoplasmic. Zn(2+) is bound at residue C57. Residues S59–D446 are Extracellular-facing. 4 cysteine pairs are disulfide-bonded: C86-C248, C293-C306, C315-C324, and C378-C399. 4 N-linked (GlcNAc...) asparagine; by host glycosylation sites follow: N89, N111, N181, and N241. N-linked (GlcNAc...) asparagine; by host glycans are attached at residues N379, N387, N404, and N409. Residues I447–P467 traverse the membrane as a helical segment. Over T468–G503 the chain is Cytoplasmic. Zn(2+)-binding residues include H469, H471, C477, H481, C489, and C491.

This sequence belongs to the arenaviridae GPC protein family. Interacts with glycoprotein G2. Part of the GP complex (GP-C) together with glycoprotein G1 and glycoprotein G2. The GP-complex interacts with protein Z, which interacts with ribonucleocapsid; these interactions may induce virion budding. As to quaternary structure, homotrimer; disulfide-linked. In pre-fusion state, G1 homotrimers bind G2 homotrimers via ionic interactions. Part of the GP complex (GP-C) together with glycoprotein G2 and the stable signal peptide. The GP-complex interacts with protein Z, which interacts with ribonucleocapsid; these interactions may induce virion budding. In terms of assembly, homotrimer. Interacts with the stable signal peptide. In pre-fusion state, G2 homotrimers bind G1 homotrimers via ionic interactions. Part of the GP complex (GP-C) together with glycoprotein G1 and the stable signal peptide. Acidification in the endosome triggers rearrangements, which ultimately leads to a 6 helix bundle formed by the two heptad repeat domains (HR1 and HR2) in post-fusion state. The GP-complex interacts with protein Z, which interacts with ribonucleocapsid; these interactions may induce virion budding. Post-translationally, specific enzymatic cleavages in vivo yield mature proteins. GP-C polyprotein is cleaved in the endoplasmic reticulum by the host protease MBTPS1. Only cleaved glycoprotein is incorporated into virions. The SSP remains stably associated with the GP complex following cleavage by signal peptidase and plays crucial roles in the trafficking of GP through the secretory pathway. In terms of processing, myristoylation is necessary for GP2-mediated fusion activity.

The protein resides in the virion membrane. It is found in the host endoplasmic reticulum membrane. The protein localises to the host Golgi apparatus membrane. Its subcellular location is the host cell membrane. Its function is as follows. Functions as a cleaved signal peptide that is retained as the third component of the GP complex (GP-C). Helps to stabilize the spike complex in its native conformation. The SSP is required for efficient glycoprotein expression, post-translational maturation cleavage of G1 and G2, glycoprotein transport to the cell surface plasma membrane, formation of infectious virus particles, and acid pH-dependent glycoprotein-mediated cell fusion. Functionally, forms the virion spikes together with glycoprotein G2. The glycoprotein spike trimers are connected to the underlying matrix. Interacts with the host receptor leading to virus endocytosis. In terms of biological role, forms the virion spikes together with glycoprotein G1. The glycoprotein spike trimers are connected to the underlying matrix. Class I viral fusion protein that directs fusion of viral and host endosomal membranes, leading to delivery of the nucleocapsid into the cytoplasm. Membrane fusion is mediated by irreversible conformational changes induced by acidification. The sequence is that of Pre-glycoprotein polyprotein GP complex from Cavia cutleri (Guinea pig).